The following is a 493-amino-acid chain: Alpha-amylase-related protein (493 aa).

Positions 1–19 are cleaved as a signal peptide; it reads MFKFALTLTLCLAGSLSLA. Gln-20 is subject to Pyrrolidone carboxylic acid. An intrachain disulfide couples Cys-47 to Cys-103. Residues Asn-117, Gln-168, and Asp-177 each contribute to the Ca(2+) site. A disulfide bridge connects residues Cys-156 and Cys-170. Arg-205 contributes to the chloride binding site. The active-site Nucleophile is the Asp-207. Residue His-211 coordinates Ca(2+). The Proton donor role is filled by Glu-244. Asn-307 and Arg-342 together coordinate chloride. Cystine bridges form between Cys-375/Cys-381, Cys-417/Cys-440, and Cys-447/Cys-459.

Belongs to the glycosyl hydrolase 13 family. In terms of assembly, monomer. Ca(2+) serves as cofactor. Chloride is required as a cofactor.

The protein localises to the secreted. The catalysed reaction is Endohydrolysis of (1-&gt;4)-alpha-D-glucosidic linkages in polysaccharides containing three or more (1-&gt;4)-alpha-linked D-glucose units.. The polypeptide is Alpha-amylase-related protein (Amyrel) (Drosophila sechellia (Fruit fly)).